Here is a 130-residue protein sequence, read N- to C-terminus: Large ribosomal subunit protein bL12 (130 aa).

Belongs to the bacterial ribosomal protein bL12 family. As to quaternary structure, homodimer. Part of the ribosomal stalk of the 50S ribosomal subunit. Forms a multimeric L10(L12)X complex, where L10 forms an elongated spine to which 2 to 4 L12 dimers bind in a sequential fashion. Binds GTP-bound translation factors.

Its function is as follows. Forms part of the ribosomal stalk which helps the ribosome interact with GTP-bound translation factors. Is thus essential for accurate translation. The sequence is that of Large ribosomal subunit protein bL12 from Parafrankia sp. (strain EAN1pec).